Consider the following 341-residue polypeptide: Malate dehydrogenase 2, mitochondrial (341 aa).

The N-terminal 22 residues, 1 to 22, are a transit peptide targeting the mitochondrion; sequence MFRSMIVRSASPVKQGLLRRGF. Residues 36–42 and Asp62 each bind NAD(+); that span reads GAAGGIG. 2 residues coordinate substrate: Arg109 and Arg115. NAD(+) contacts are provided by residues Asn122 and 145–147; that span reads ISN. Substrate contacts are provided by Asn147 and Arg181. The active-site Proton acceptor is the His205. Residue Met256 coordinates NAD(+).

It belongs to the LDH/MDH superfamily. MDH type 1 family. Homodimer. As to expression, expressed in rosette leaves at low levels.

It localises to the mitochondrion matrix. The enzyme catalyses (S)-malate + NAD(+) = oxaloacetate + NADH + H(+). Functionally, catalyzes a reversible NAD-dependent dehydrogenase reaction involved in central metabolism and redox homeostasis between organelle compartments. Required for carbon dioxide and energy partitioning in leaves. May limit photorespiration during the dark phase. Can convert 2-ketoglutarate to L-2-hydroxyglutarate in vitro. The polypeptide is Malate dehydrogenase 2, mitochondrial (Arabidopsis thaliana (Mouse-ear cress)).